We begin with the raw amino-acid sequence, 192 residues long: Fe/S biogenesis protein NfuA (192 aa).

2 residues coordinate [4Fe-4S] cluster: Cys149 and Cys152.

It belongs to the NfuA family. As to quaternary structure, homodimer. It depends on [4Fe-4S] cluster as a cofactor.

In terms of biological role, involved in iron-sulfur cluster biogenesis. Binds a 4Fe-4S cluster, can transfer this cluster to apoproteins, and thereby intervenes in the maturation of Fe/S proteins. Could also act as a scaffold/chaperone for damaged Fe/S proteins. The protein is Fe/S biogenesis protein NfuA of Shewanella oneidensis (strain ATCC 700550 / JCM 31522 / CIP 106686 / LMG 19005 / NCIMB 14063 / MR-1).